Here is a 204-residue protein sequence, read N- to C-terminus: Somatotropin (204 aa).

Residues 1-17 form the signal peptide; sequence MNSVVLLLSVVCLGVSS. Gln-18 is subject to Pyrrolidone carboxylic acid. Position 36 (His-36) interacts with Zn(2+). Residues Cys-69 and Cys-177 are joined by a disulfide bond. A Zn(2+)-binding site is contributed by Glu-186. Cys-194 and Cys-202 are joined by a disulfide.

Belongs to the somatotropin/prolactin family.

It is found in the secreted. Functionally, growth hormone plays an important role in growth control and involved in the regulation of several anabolic processes. This chain is Somatotropin (gh), found in Oreochromis niloticus (Nile tilapia).